Reading from the N-terminus, the 122-residue chain is Small ribosomal subunit protein uS13 (122 aa).

The disordered stretch occupies residues 99 to 122 (RGQRTHTNARTRKGPAKAIAGKKK).

The protein belongs to the universal ribosomal protein uS13 family. In terms of assembly, part of the 30S ribosomal subunit. Forms a loose heterodimer with protein S19. Forms two bridges to the 50S subunit in the 70S ribosome.

Located at the top of the head of the 30S subunit, it contacts several helices of the 16S rRNA. In the 70S ribosome it contacts the 23S rRNA (bridge B1a) and protein L5 of the 50S subunit (bridge B1b), connecting the 2 subunits; these bridges are implicated in subunit movement. Contacts the tRNAs in the A and P-sites. This Bradyrhizobium sp. (strain BTAi1 / ATCC BAA-1182) protein is Small ribosomal subunit protein uS13.